A 164-amino-acid chain; its full sequence is Lipoprotein signal peptidase (164 aa).

3 helical membrane passes run 12-32, 70-90, and 102-122; these read WLWL…LILQ, WFFA…MYRS, and ALII…GFVV. Active-site residues include Asp-123 and Asp-141. Residues 137–157 traverse the membrane as a helical segment; sequence FNLADTAICVGAALIVLEGFL.

The protein belongs to the peptidase A8 family.

It localises to the cell inner membrane. The catalysed reaction is Release of signal peptides from bacterial membrane prolipoproteins. Hydrolyzes -Xaa-Yaa-Zaa-|-(S,diacylglyceryl)Cys-, in which Xaa is hydrophobic (preferably Leu), and Yaa (Ala or Ser) and Zaa (Gly or Ala) have small, neutral side chains.. The protein operates within protein modification; lipoprotein biosynthesis (signal peptide cleavage). This protein specifically catalyzes the removal of signal peptides from prolipoproteins. This chain is Lipoprotein signal peptidase, found in Escherichia coli O157:H7.